A 210-amino-acid chain; its full sequence is Dephospho-CoA kinase (210 aa).

Positions 15-210 constitute a DPCK domain; sequence VLGLTGGIGC…HKGYLKLALK (196 aa). 23-28 contributes to the ATP binding site; the sequence is GCGKTA.

This sequence belongs to the CoaE family.

Its subcellular location is the cytoplasm. It carries out the reaction 3'-dephospho-CoA + ATP = ADP + CoA + H(+). It functions in the pathway cofactor biosynthesis; coenzyme A biosynthesis; CoA from (R)-pantothenate: step 5/5. Functionally, catalyzes the phosphorylation of the 3'-hydroxyl group of dephosphocoenzyme A to form coenzyme A. This is Dephospho-CoA kinase from Pseudoalteromonas translucida (strain TAC 125).